We begin with the raw amino-acid sequence, 380 residues long: Cytochrome b (380 aa).

A run of 4 helical transmembrane segments spans residues 34 to 54 (FGSLLAMCLITQILTGLLLAM), 78 to 99 (WLIRNLHANGASFFFICIFLHI), 114 to 134 (WNTGVILLLTLMATAFVGYVL), and 179 to 199 (FFALHFLLPFLIAGITIIHLT). The heme b site is built by His84 and His98. Positions 183 and 197 each coordinate heme b. His202 is an a ubiquinone binding site. The next 4 helical transmembrane spans lie at 227–247 (IKDILGLTLMLTPFLTLALFS), 289–309 (LGGVLALAASVLILLLIPFLH), 321–341 (LSQTLFWLLVANLLILTWIGS), and 348–368 (FIIIGQMASLSYFTILLILFP).

The protein belongs to the cytochrome b family. In terms of assembly, the cytochrome bc1 complex contains 11 subunits: 3 respiratory subunits (MT-CYB, CYC1 and UQCRFS1), 2 core proteins (UQCRC1 and UQCRC2) and 6 low-molecular weight proteins (UQCRH/QCR6, UQCRB/QCR7, UQCRQ/QCR8, UQCR10/QCR9, UQCR11/QCR10 and a cleavage product of UQCRFS1). This cytochrome bc1 complex then forms a dimer. The cofactor is heme b.

It is found in the mitochondrion inner membrane. Component of the ubiquinol-cytochrome c reductase complex (complex III or cytochrome b-c1 complex) that is part of the mitochondrial respiratory chain. The b-c1 complex mediates electron transfer from ubiquinol to cytochrome c. Contributes to the generation of a proton gradient across the mitochondrial membrane that is then used for ATP synthesis. This chain is Cytochrome b (MT-CYB), found in Coturnix japonica (Japanese quail).